A 917-amino-acid polypeptide reads, in one-letter code: DNA topoisomerase 1 beta (917 aa).

A disordered region spans residues Met-1–Lys-368. Residues Arg-32–Pro-63 show a composition bias toward polar residues. Residues Ser-66 to Ser-82 are compositionally biased toward low complexity. Over residues Pro-89–Lys-100 the composition is skewed to polar residues. Basic and acidic residues-rich tracts occupy residues Pro-102 to Gly-116 and Asp-134 to Thr-149. The segment covering Lys-150 to Arg-170 has biased composition (polar residues). Residues Tyr-177–Ala-187 show a composition bias toward basic and acidic residues. Polar residues predominate over residues Met-189–Lys-205. Basic and acidic residues-rich tracts occupy residues Lys-256 to Lys-265 and Val-296 to Val-307. Phosphoserine is present on Ser-301. Residues Asp-316–Arg-338 show a composition bias toward low complexity. Interaction with DNA stretches follow at residues Lys-575–Tyr-576, Arg-638–Lys-643, and Thr-729–Lys-731. A Topo IB-type catalytic domain is found at Ser-582 to Cys-912. A coiled-coil region spans residues Val-779–Met-858. Tyr-870 (O-(3'-phospho-DNA)-tyrosine intermediate) is an active-site residue.

It belongs to the type IB topoisomerase family.

The protein localises to the nucleus. It catalyses the reaction ATP-independent breakage of single-stranded DNA, followed by passage and rejoining.. Its function is as follows. Releases the supercoiling and torsional tension of DNA introduced during the DNA replication and transcription by transiently cleaving and rejoining one strand of the DNA duplex. Introduces a single-strand break via transesterification at a target site in duplex DNA. The scissile phosphodiester is attacked by the catalytic tyrosine of the enzyme, resulting in the formation of a DNA-(3'-phosphotyrosyl)-enzyme intermediate and the expulsion of a 5'-OH DNA strand. The free DNA strand then rotates around the intact phosphodiester bond on the opposing strand, thus removing DNA supercoils. Finally, in the religation step, the DNA 5'-OH attacks the covalent intermediate to expel the active-site tyrosine and restore the DNA phosphodiester backbone. Topoisomerases 1 enzymes (TOP1A and TOP1B) are essential for plant survival. The sequence is that of DNA topoisomerase 1 beta from Arabidopsis thaliana (Mouse-ear cress).